The following is a 336-amino-acid chain: L-Ala-D/L-amino acid epimerase (336 aa).

Residues threonine 130 and 152 to 154 (KIK) each bind substrate. 3 residues coordinate Mg(2+): aspartate 178, glutamate 204, and aspartate 229. Residues lysine 251 and 301-303 (DMD) contribute to the substrate site.

The protein belongs to the mandelate racemase/muconate lactonizing enzyme family. Requires Mg(2+) as cofactor.

Its function is as follows. Catalyzes the epimerization of D-Ala-D-Ala to D-Ala-L-Ala. Has broad substrate specificity and catalyzes the epimerization of a variety of dipeptides containing an N-terminal Ala followed by Ser, Thr, Val, Met, His, Phe or Trp (in vitro). In Flavobacterium johnsoniae (strain ATCC 17061 / DSM 2064 / JCM 8514 / BCRC 14874 / CCUG 350202 / NBRC 14942 / NCIMB 11054 / UW101) (Cytophaga johnsonae), this protein is L-Ala-D/L-amino acid epimerase.